The sequence spans 224 residues: MSALGAPAPYLHHPTDSHSGRVSFLGSQPSAEVTAVAQLLKDLDRSTFRKLLKLVVGALHGKDCREAVQHLGASANLSEERLAVLLAGTHTLLQQALRLPPASLKPDAFQDELQELGIPQDMIGDLASLAFGSQRPLLDSVAQQQGSSLPRVSNFRWRVDVAISTSAQSRSLQPSVLMQLKLTDGSAHRFEVPIAKFQELRYSVALVLKEMAELERKCERKLQD.

The tract at residues 1–24 (MSALGAPAPYLHHPTDSHSGRVSF) is disordered. Serine 2 carries the post-translational modification N-acetylserine. A COMM domain is found at 151–215 (RVSNFRWRVD…LVLKEMAELE (65 aa)).

Belongs to the COMM domain-containing protein 5 family. As to quaternary structure, component of the commander complex consisting of the CCC subcomplex and the retriever subcomplex. Component of the CCC (COMMD/CCDC22/CCDC93) subcomplex consisting of COMMD1, COMMD2, COMMD3, COMMD4, COMMD5, COMMD6, COMMD7, COMMD8, COMMD9, COMMD10, CCDC22 and CCDC93; within the complex forms a heterodimer with COMMD10. Interacts (via COMM domain) with COMMD1 (via COMM domain). Interacts with RELA, RELB, NFKB1/p105. Interacts with CCDC22, CCDC93, SCNN1B, CUL2, CUL3, CUL4A, CUL4B, CUL7.

Its subcellular location is the nucleus. It is found in the cytoplasm. Scaffold protein in the commander complex that is essential for endosomal recycling of transmembrane cargos; the commander complex is composed of the CCC subcomplex and the retriever subcomplex. May modulate activity of cullin-RING E3 ubiquitin ligase (CRL) complexes. Negatively regulates cell proliferation. Negatively regulates cell cycle G2/M phase transition probably by transactivating p21/CDKN1A through the p53/TP53-independent signaling pathway. Involved in kidney proximal tubule morphogenesis. Down-regulates activation of NF-kappa-B. In Mus musculus (Mouse), this protein is COMM domain-containing protein 5 (Commd5).